We begin with the raw amino-acid sequence, 92 residues long: RNA-binding protein Hfq (92 aa).

One can recognise a Sm domain in the interval D10–I71. Residues Y73–G92 are disordered. Positions A75 to G92 are enriched in low complexity.

This sequence belongs to the Hfq family. As to quaternary structure, homohexamer.

Functionally, RNA chaperone that binds small regulatory RNA (sRNAs) and mRNAs to facilitate mRNA translational regulation in response to envelope stress, environmental stress and changes in metabolite concentrations. Also binds with high specificity to tRNAs. The sequence is that of RNA-binding protein Hfq from Caldicellulosiruptor bescii (strain ATCC BAA-1888 / DSM 6725 / KCTC 15123 / Z-1320) (Anaerocellum thermophilum).